We begin with the raw amino-acid sequence, 354 residues long: MKKILIIGLGLIGSSIALGIKKAHPEFEILGSDREEVENIAQKRGIIDSKVELVKGAQEADIIILAVPISVTLELLKQIATFDLKDGLLITDAGSTKSEIVELANQLFSGTKVKFIGGHPMAGSHKSGVMAADLNLFENAYYVLTEESQELRELLKGLHAKFIILDAKEHDKVTGQVSHFPHILASTLVWQSDDYAKEHPLVKHLAAGGFRDLTRIAEADSLMWTSVLLSNPEITLERIENFKKHLDEIALKITKRDSQAIEHFFEEGKKIRQAMEIHKGALPNFYDLFISVPDEKGVVLRVLALLQDFSITNIKINEENREDIHGQLQISFKRAEDLQEAREIIEKATDFTVV.

The Prephenate/arogenate dehydrogenase domain occupies 2-283 (KKILIIGLGL…AMEIHKGALP (282 aa)). 3–33 (KILIIGLGLIGSSIALGIKKAHPEFEILGSD) lines the NAD(+) pocket. The ACT domain occupies 287-354 (DLFISVPDEK…IEKATDFTVV (68 aa)).

The protein belongs to the prephenate/arogenate dehydrogenase family.

It catalyses the reaction prephenate + NAD(+) = 3-(4-hydroxyphenyl)pyruvate + CO2 + NADH. It functions in the pathway amino-acid biosynthesis; L-tyrosine biosynthesis; (4-hydroxyphenyl)pyruvate from prephenate (NAD(+) route): step 1/1. This Lactococcus lactis subsp. cremoris (strain MG1363) protein is Prephenate dehydrogenase (tyrA).